We begin with the raw amino-acid sequence, 284 residues long: 4-diphosphocytidyl-2-C-methyl-D-erythritol kinase (284 aa).

Residue lysine 22 is part of the active site. 104-114 (PVGAGLGGASS) lines the ATP pocket. Aspartate 146 is a catalytic residue.

This sequence belongs to the GHMP kinase family. IspE subfamily.

The catalysed reaction is 4-CDP-2-C-methyl-D-erythritol + ATP = 4-CDP-2-C-methyl-D-erythritol 2-phosphate + ADP + H(+). Its pathway is isoprenoid biosynthesis; isopentenyl diphosphate biosynthesis via DXP pathway; isopentenyl diphosphate from 1-deoxy-D-xylulose 5-phosphate: step 3/6. Its function is as follows. Catalyzes the phosphorylation of the position 2 hydroxy group of 4-diphosphocytidyl-2C-methyl-D-erythritol. This Hydrogenobaculum sp. (strain Y04AAS1) protein is 4-diphosphocytidyl-2-C-methyl-D-erythritol kinase.